A 218-amino-acid polypeptide reads, in one-letter code: Peptide deformylase 1 (218 aa).

2 residues coordinate Fe cation: Cys126 and His168. The active site involves Glu169. His172 provides a ligand contact to Fe cation.

This sequence belongs to the polypeptide deformylase family. Fe(2+) is required as a cofactor.

It carries out the reaction N-terminal N-formyl-L-methionyl-[peptide] + H2O = N-terminal L-methionyl-[peptide] + formate. Functionally, removes the formyl group from the N-terminal Met of newly synthesized proteins. Requires at least a dipeptide for an efficient rate of reaction. N-terminal L-methionine is a prerequisite for activity but the enzyme has broad specificity at other positions. This Streptomyces coelicolor (strain ATCC BAA-471 / A3(2) / M145) protein is Peptide deformylase 1.